We begin with the raw amino-acid sequence, 375 residues long: MHCARYSTGTCRSCQWLEKPYPQQLSDKQQHLEDLLQPHAVQRWLPVQPSAQTAFRNKAKMVVSGSVERPLLGMLHRDGTAVDLCDCPLYPTSFAPVFDVLKVFIARAGLTPYNVARRRGELKYLLLTESTQRGTFMLRFVLRSETKLAQLRAAMPWLQQQLPQLEVISANIQPVHQAIMEGKTEIILSDAAALAEQFNQVPLYIRPQSFFQTNPQVAAALYATARDWVAELKITSMWDLFCGVGGFGLHCASSEMRLTGIEISAEAIACARRSAEQLGLKHVEFQALDSTQFATAKAEIPDLVLVNPPRRGIGSELCSYLSRMAPDYILYSSCNAESMAKDMTELANYRALRVQLFDMFPHTAHYEVLTLLKRA.

[4Fe-4S] cluster contacts are provided by cysteine 3, cysteine 11, cysteine 14, and cysteine 87. 4 residues coordinate S-adenosyl-L-methionine: glutamine 212, phenylalanine 241, glutamate 262, and asparagine 307. Cysteine 334 functions as the Nucleophile in the catalytic mechanism.

Belongs to the class I-like SAM-binding methyltransferase superfamily. RNA M5U methyltransferase family. RlmC subfamily.

It catalyses the reaction uridine(747) in 23S rRNA + S-adenosyl-L-methionine = 5-methyluridine(747) in 23S rRNA + S-adenosyl-L-homocysteine + H(+). Its function is as follows. Catalyzes the formation of 5-methyl-uridine at position 747 (m5U747) in 23S rRNA. This Pectobacterium atrosepticum (strain SCRI 1043 / ATCC BAA-672) (Erwinia carotovora subsp. atroseptica) protein is 23S rRNA (uracil(747)-C(5))-methyltransferase RlmC.